The primary structure comprises 207 residues: Imidazole glycerol phosphate synthase subunit HisH (207 aa).

Residues 1-207 (MIGIIDYGMG…KRFGQLVEGN (207 aa)) enclose the Glutamine amidotransferase type-1 domain. The active-site Nucleophile is Cys79. Catalysis depends on residues His185 and Glu187.

Heterodimer of HisH and HisF.

The protein resides in the cytoplasm. It catalyses the reaction 5-[(5-phospho-1-deoxy-D-ribulos-1-ylimino)methylamino]-1-(5-phospho-beta-D-ribosyl)imidazole-4-carboxamide + L-glutamine = D-erythro-1-(imidazol-4-yl)glycerol 3-phosphate + 5-amino-1-(5-phospho-beta-D-ribosyl)imidazole-4-carboxamide + L-glutamate + H(+). The enzyme catalyses L-glutamine + H2O = L-glutamate + NH4(+). It functions in the pathway amino-acid biosynthesis; L-histidine biosynthesis; L-histidine from 5-phospho-alpha-D-ribose 1-diphosphate: step 5/9. In terms of biological role, IGPS catalyzes the conversion of PRFAR and glutamine to IGP, AICAR and glutamate. The HisH subunit catalyzes the hydrolysis of glutamine to glutamate and ammonia as part of the synthesis of IGP and AICAR. The resulting ammonia molecule is channeled to the active site of HisF. In Shouchella clausii (strain KSM-K16) (Alkalihalobacillus clausii), this protein is Imidazole glycerol phosphate synthase subunit HisH.